We begin with the raw amino-acid sequence, 256 residues long: uncharacterized protein (256 aa).

Residues 211–256 (RKLQASVTTTPPKRCKLADRPAQTTQDTPRAPQPAPVRAQRPLFTL) form a disordered region. A compositionally biased stretch (low complexity) spans 246–256 (PVRAQRPLFTL).

This is an uncharacterized protein from Orgyia pseudotsugata (Douglas-fir tussock moth).